The following is a 1086-amino-acid chain: Rh5-interacting protein (1086 aa).

The N-terminal stretch at 1-19 (MFRIFFTLLIIILIKKTSA) is a signal peptide. Asparagine 103, asparagine 144, asparagine 228, asparagine 303, asparagine 334, asparagine 480, asparagine 498, asparagine 506, asparagine 526, and asparagine 646 each carry an N-linked (GlcNAc...) asparagine glycan. 2 EGF-like domains span residues 287–321 (RCTQ…NNCE) and 325–362 (LCTV…NKCY). EGF-like domains follow at residues 636–675 (SCSN…KLCE), 679–715 (DCES…GKCV), 719–753 (KCDL…GVCI), 818–854 (YCKD…GECI), 858–897 (SCLI…GKCV), 901–938 (KCVH…GVCL), and 942–979 (PCLK…DSCV). 2 N-linked (GlcNAc...) asparagine glycosylation sites follow: asparagine 964 and asparagine 1021.

As to quaternary structure, component of the PfRH5 adhesion complex composed of 1 copy of CyRPA, RH5 and RIPR; the complex is formed during merozoite invasion of host erythrocytes specifically at the interface between the parasite and host membranes. Within the complex, interacts with CyRPA. CyRPA recruitment of RIPR to RH5-P113-BSG leads to the formation of the PfRH5 adhesion complex which probably in turn releases RH5 from P113 while maintaining the interaction of the PfRH5 adhesion complex with BSG. Post-translationally, proteolytically cleaved into two chains of 125kDa and 65kDa which remain associated. The cleavage occurs at the schizont stage prior to the release of merozoites. In terms of processing, contains disulfide bonds.

The protein resides in the secreted. It localises to the cytoplasmic vesicle. The protein localises to the secretory vesicle. It is found in the microneme lumen. Its subcellular location is the cell membrane. The protein resides in the host cell membrane. Functionally, essential for the invasion of host erythrocytes by blood stage merozoites. As part of the PfRH5 adhesion complex, facilitates the interaction of RH5 and human BSG required for the Ca(2+) release into the erythrocyte. This chain is Rh5-interacting protein (RIPR), found in Plasmodium falciparum (isolate 3D7).